The sequence spans 2068 residues: Lipoxygenase homology domain-containing protein 1 (2068 aa).

15 PLAT domains span residues 43–160 (KVYE…RDLL), 172–287 (NKYE…RDIL), 296–412 (ITYI…RQLY), 425–540 (YPWS…REMT), 553–673 (ARYR…RELL), 684–803 (FRYH…VELY), 814–934 (VHYE…RELL), 970–1088 (TTFS…RDLF), 1101–1226 (VPYE…RELV), 1255–1373 (VLYS…RLFY), 1422–1540 (IPYY…RVFD), 1553–1668 (VLYE…CEIC), 1680–1798 (TSYT…RDFA), 1811–1932 (TTYE…VFEV), and 1949–2065 (VKYE…RELF).

In terms of tissue distribution, expressed in the inner ear, specifically in hair cells. Higher expression is detected in the cochlea.

The protein resides in the cell projection. The protein localises to the stereocilium. In terms of biological role, required for normal function of hair cells in the inner ear. The sequence is that of Lipoxygenase homology domain-containing protein 1 (Loxhd1) from Mus musculus (Mouse).